A 61-amino-acid polypeptide reads, in one-letter code: MMFTVFLLVVLTTTVVSFPSDSASDGRDDEAKDERSDMYELKRNGRCCHPACGGKYFKCGR.

An N-terminal signal peptide occupies residues Met-1–Ser-17. The propeptide occupies Phe-18 to Asn-44. 2 disulfides stabilise this stretch: Cys-47–Cys-52 and Cys-48–Cys-59. Position 59 is a cysteine amide (Cys-59).

The protein belongs to the conotoxin A superfamily. In terms of tissue distribution, expressed by the venom duct.

Its subcellular location is the secreted. The sequence is that of Alpha-conotoxin CnIJ from Conus consors (Singed cone).